The sequence spans 210 residues: RNA chaperone ProQ (210 aa).

2 stretches are compositionally biased toward basic and acidic residues: residues 103–124 (LKES…EKAK) and 132–144 (RKAD…DKPK). The disordered stretch occupies residues 103–148 (LKESKERVFASRRTNNKEEKAKQPRRPAPRKADAAAKSDKPKAAPK).

Belongs to the ProQ family.

The protein resides in the cytoplasm. Its function is as follows. RNA chaperone with significant RNA binding, RNA strand exchange and RNA duplexing activities. The polypeptide is RNA chaperone ProQ (Aeromonas salmonicida (strain A449)).